We begin with the raw amino-acid sequence, 185 residues long: Jasmonate-induced protein homolog (185 aa).

It belongs to the jasmonate-induced protein family.

This is Jasmonate-induced protein homolog from Atriplex canescens (Fourwing saltbush).